The chain runs to 380 residues: Cytochrome b (380 aa).

The next 4 helical transmembrane spans lie at 34–54, 78–99, 114–134, and 179–199; these read YGSL…FLAM, WLMR…YLHI, WNIG…GYVL, and FFTF…LHLL. His-84 and His-98 together coordinate heme b. His-183 and His-197 together coordinate heme b. His-202 lines the a ubiquinone pocket. A run of 4 helical transmembrane segments spans residues 227-247, 289-309, 321-341, and 348-368; these read YKDT…STTN, LGGV…PSLH, LSQL…WIGG, and FILI…VLLP.

Belongs to the cytochrome b family. As to quaternary structure, the cytochrome bc1 complex contains 3 respiratory subunits (MT-CYB, CYC1 and UQCRFS1), 2 core proteins (UQCRC1 and UQCRC2) and probably 6 low-molecular weight proteins. Requires heme b as cofactor.

The protein localises to the mitochondrion inner membrane. Component of the ubiquinol-cytochrome c reductase complex (complex III or cytochrome b-c1 complex) that is part of the mitochondrial respiratory chain. The b-c1 complex mediates electron transfer from ubiquinol to cytochrome c. Contributes to the generation of a proton gradient across the mitochondrial membrane that is then used for ATP synthesis. This chain is Cytochrome b (mt-cyb), found in Typhlonectes natans (Rubber eel).